The sequence spans 782 residues: Coiled-coil alpha-helical rod protein 1 (782 aa).

Composition is skewed to basic and acidic residues over residues 62 to 74 and 208 to 218; these read ERDV…EPGR and ETRRAGEAKEL. Disordered stretches follow at residues 62–82 and 191–218; these read ERDV…WGLE and SSLT…AKEL. Coiled-coil stretches lie at residues 82–314, 344–435, and 498–691; these read EGSQ…ELTR, LMVQ…VVNA, and VADV…QQEG.

The protein resides in the cytoplasm. It is found in the nucleus. In terms of biological role, may be a regulator of keratinocyte proliferation or differentiation. In Pongo pygmaeus (Bornean orangutan), this protein is Coiled-coil alpha-helical rod protein 1 (CCHCR1).